Reading from the N-terminus, the 345-residue chain is Probable aldo-keto reductase 3 (345 aa).

The active-site Proton donor is tyrosine 63. Histidine 130 contacts substrate. 209–219 (SPLGRGFFASG) contacts NADP(+).

This sequence belongs to the aldo/keto reductase family.

The sequence is that of Probable aldo-keto reductase 3 from Arabidopsis thaliana (Mouse-ear cress).